Here is an 86-residue protein sequence, read N- to C-terminus: MVNMKCVALIVIVMMAFMMVDPSMGVGECVRGRCPSGMCCSQFGYCGKGPKYCGRASTTVDHQADVAATKTAKNPTDAKLAGAGSP.

Residues 1–25 form the signal peptide; that stretch reads MVNMKCVALIVIVMMAFMMVDPSMG. 3 disulfide bridges follow: Cys29–Cys40, Cys34–Cys46, and Cys39–Cys53. The Chitin-binding type-1 domain maps to 29–53; sequence CVRGRCPSGMCCSQFGYCGKGPKYC. Positions 56–86 are cleaved as a propeptide — removed in mature form; the sequence is ASTTVDHQADVAATKTAKNPTDAKLAGAGSP.

In terms of assembly, homodimer.

Functionally, chitin-binding protein with a defensive function against numerous chitin containing fungal pathogens. It is also a potent inhibitor of Gram-positive bacteria. In Amaranthus caudatus (Love-lies-bleeding), this protein is Antimicrobial peptide 2.